Consider the following 434-residue polypeptide: Gamma-enolase (434 aa).

Serine 2 bears the N-acetylserine mark. An N6-acetyllysine modification is found at lysine 5. Residue threonine 26 is modified to Phosphothreonine. Serine 40 is a binding site for Mg(2+). A Phosphotyrosine modification is found at tyrosine 44. The residue at position 60 (lysine 60) is an N6-acetyllysine; alternate. Lysine 60 is subject to N6-succinyllysine; alternate. Residue lysine 64 is modified to N6-acetyllysine. Lysine 89 carries the N6-acetyllysine; alternate modification. N6-succinyllysine; alternate is present on lysine 89. Positions 158 and 167 each coordinate substrate. N6-acetyllysine occurs at positions 193, 197, and 199. Lysine 202 carries the N6-acetyllysine; alternate modification. Lysine 202 is covalently cross-linked (Glycyl lysine isopeptide (Lys-Gly) (interchain with G-Cter in SUMO2); alternate). The active-site Proton donor is the glutamate 210. An N6-acetyllysine; alternate mark is found at lysine 228 and lysine 233. An N6-succinyllysine; alternate modification is found at lysine 228. Lysine 233 is subject to N6-(2-hydroxyisobutyryl)lysine; alternate. Aspartate 245 is a Mg(2+) binding site. Lysine 256 bears the N6-acetyllysine mark. Serine 263 is subject to Phosphoserine. Tyrosine 287 is modified (phosphotyrosine). At serine 291 the chain carries Phosphoserine. Mg(2+)-binding residues include glutamate 293 and aspartate 318. Glutamate 293 and aspartate 318 together coordinate substrate. Residues lysine 335 and lysine 343 each carry the N6-acetyllysine modification. The active-site Proton acceptor is the lysine 343. Residues 370–373 and lysine 394 contribute to the substrate site; that span reads SHRS. Residue lysine 406 is modified to N6-acetyllysine.

The protein belongs to the enolase family. As to quaternary structure, mammalian enolase is composed of 3 isozyme subunits, alpha, beta and gamma, which can form homodimers or heterodimers which are cell-type and development-specific. Requires Mg(2+) as cofactor. As to expression, skeletal muscle (at protein level). The alpha/alpha homodimer is expressed in embryo and in most adult tissues. The alpha/beta heterodimer and the beta/beta homodimer are found in striated muscle, and the alpha/gamma heterodimer and the gamma/gamma homodimer in neurons.

Its subcellular location is the cytoplasm. It localises to the cell membrane. The catalysed reaction is (2R)-2-phosphoglycerate = phosphoenolpyruvate + H2O. Its pathway is carbohydrate degradation; glycolysis; pyruvate from D-glyceraldehyde 3-phosphate: step 4/5. Functionally, has neurotrophic and neuroprotective properties on a broad spectrum of central nervous system (CNS) neurons. Binds, in a calcium-dependent manner, to cultured neocortical neurons and promotes cell survival. This is Gamma-enolase (Eno2) from Mus musculus (Mouse).